The sequence spans 39 residues: Photosystem II reaction center protein L (39 aa).

The helical transmembrane segment at 18-38 (SLYWGLLLIFVLAVLFSNYFF) threads the bilayer.

It belongs to the PsbL family. PSII is composed of 1 copy each of membrane proteins PsbA, PsbB, PsbC, PsbD, PsbE, PsbF, PsbH, PsbI, PsbJ, PsbK, PsbL, PsbM, PsbT, PsbX, PsbY, PsbZ, Psb30/Ycf12, at least 3 peripheral proteins of the oxygen-evolving complex and a large number of cofactors. It forms dimeric complexes.

The protein localises to the plastid thylakoid membrane. One of the components of the core complex of photosystem II (PSII). PSII is a light-driven water:plastoquinone oxidoreductase that uses light energy to abstract electrons from H(2)O, generating O(2) and a proton gradient subsequently used for ATP formation. It consists of a core antenna complex that captures photons, and an electron transfer chain that converts photonic excitation into a charge separation. This subunit is found at the monomer-monomer interface and is required for correct PSII assembly and/or dimerization. The polypeptide is Photosystem II reaction center protein L (Cuscuta gronovii (Common dodder)).